The primary structure comprises 189 residues: MRRILFVALSVMFLAGCPSLPPEQPEPPTPVVPVTPSEKPTPPSEKVPEPPKMSAIDWESTVQPLVEQLVKAHGLENAKLLLVDTVKNNTNGALQTMQATDALRQAISSEHVFELIPQNQVQNARQSLGLSEEDSLGLRSKAIGLARYLNAEYVLYSIVSGNSDKRDIVMQLMLVKTGEILWSGHGDVK.

An N-terminal signal peptide occupies residues 1–16 (MRRILFVALSVMFLAG). Residue Cys-17 is the site of N-palmitoyl cysteine attachment. The S-diacylglycerol cysteine moiety is linked to residue Cys-17. A disordered region spans residues 18-52 (PSLPPEQPEPPTPVVPVTPSEKPTPPSEKVPEPPK). Residues 19–45 (SLPPEQPEPPTPVVPVTPSEKPTPPSE) are compositionally biased toward pro residues.

This sequence belongs to the LpoB family. In terms of assembly, interacts with PBP1b.

It is found in the cell outer membrane. Its function is as follows. Regulator of peptidoglycan synthesis that is essential for the function of penicillin-binding protein 1B (PBP1b). The sequence is that of Penicillin-binding protein activator LpoB from Photorhabdus laumondii subsp. laumondii (strain DSM 15139 / CIP 105565 / TT01) (Photorhabdus luminescens subsp. laumondii).